We begin with the raw amino-acid sequence, 311 residues long: 2-dehydro-3-deoxygluconokinase (311 aa).

Residues 34-35, 106-108, and Arg-166 contribute to the substrate site; these read GS and YYR. ATP is bound by residues 164–166, 224–229, 253–256, and Ser-283; these read NIR, KLGPKG, and GAGD. 2 residues coordinate substrate: Gly-253 and Asp-256. Catalysis depends on Asp-256, which acts as the Proton acceptor. Asp-292 contacts substrate.

It belongs to the carbohydrate kinase PfkB family. As to quaternary structure, homotetramer. A divalent metal cation is required as a cofactor.

The enzyme catalyses 2-dehydro-3-deoxy-D-gluconate + ATP = 2-dehydro-3-deoxy-6-phospho-D-gluconate + ADP + H(+). It participates in carbohydrate acid metabolism; 2-dehydro-3-deoxy-D-gluconate degradation; D-glyceraldehyde 3-phosphate and pyruvate from 2-dehydro-3-deoxy-D-gluconate: step 1/2. Its function is as follows. Involved in the degradation of glucose via the semi-phosphorylative Entner-Doudoroff pathway. Catalyzes the phosphorylation of 2-keto-3-deoxygluconate (KDG) to produce 2-keto-3-deoxy-6-phosphogluconate (KDPG). Can also use GTP, but not ADP or AMP, as a phosphoryl donor and 2-keto-D-gluconate (KG) as a phosphoryl acceptor. The chain is 2-dehydro-3-deoxygluconokinase from Sulfurisphaera tokodaii (strain DSM 16993 / JCM 10545 / NBRC 100140 / 7) (Sulfolobus tokodaii).